The following is a 75-amino-acid chain: DNA-directed RNA polymerase subunit omega (75 aa).

It belongs to the RNA polymerase subunit omega family. In cyanobacteria the RNAP catalytic core is composed of 2 alpha, 1 beta, 1 beta', 1 gamma and 1 omega subunit. When a sigma factor is associated with the core the holoenzyme is formed, which can initiate transcription.

The enzyme catalyses RNA(n) + a ribonucleoside 5'-triphosphate = RNA(n+1) + diphosphate. Its function is as follows. Promotes RNA polymerase assembly. Latches the N- and C-terminal regions of the beta' subunit thereby facilitating its interaction with the beta and alpha subunits. The polypeptide is DNA-directed RNA polymerase subunit omega (Synechococcus sp. (strain CC9311)).